The sequence spans 1597 residues: Rho guanine nucleotide exchange factor 5 (1597 aa).

3 disordered regions span residues 138-246 (PFSS…EGTL), 258-455 (EEQM…SLEP), and 467-1072 (GSFL…VFRE). At serine 184 the chain carries Phosphoserine. The segment covering 192–204 (ETNQNEGSESGTI) has biased composition (polar residues). The segment covering 217–237 (ESQGLLHPQEVQVLEEQGQQE) has biased composition (low complexity). A compositionally biased stretch (basic and acidic residues) spans 266-278 (NDEKGEQKQKQEQ). Residues 299–309 (GLNDGEWEQED) are compositionally biased toward acidic residues. Basic and acidic residues-rich tracts occupy residues 323–368 (GEER…KEKG) and 394–404 (RSREEENEHHG). The segment covering 428–438 (LMTQIPGTQTE) has biased composition (polar residues). Residues serine 445 and serine 450 each carry the phosphoserine modification. Basic and acidic residues predominate over residues 474–490 (SPDKEIDQNSQQEESRL). Positions 512–522 (PRTPDSAPPSP) are enriched in pro residues. 2 stretches are compositionally biased toward polar residues: residues 583–601 (STGT…TVQH) and 655–682 (DYST…NLER). A compositionally biased stretch (basic and acidic residues) spans 731–746 (QRRDTHPSVVETDGHA). 2 stretches are compositionally biased toward pro residues: residues 812 to 828 (PLPP…PPIS) and 838 to 856 (PLPP…PLPP). The residue at position 866 (arginine 866) is an Asymmetric dimethylarginine. The segment covering 901–920 (ATARSTESFTSTSRSKSEVS) has biased composition (low complexity). Over residues 926–941 (SNMTNFLCPSSPTTPW) the composition is skewed to polar residues. Basic and acidic residues predominate over residues 950 to 969 (SKDEAGVSEHPEAPAREPLR). Phosphoserine occurs at positions 983, 1011, and 1044. Basic and acidic residues predominate over residues 990-1012 (QPEKPSHLHLEKASSWPHRRDSG). The span at 1057–1072 (AVEKHPGPSDTVVFRE) shows a compositional bias: basic and acidic residues. A Phosphoserine modification is found at serine 1126. A DH domain is found at 1174 to 1358 (KLQEVKFELI…EQLIRDCNNN (185 aa)). A PH domain is found at 1390 to 1502 (WLVKSGELTA…WISALAMPRE (113 aa)). The SH3 domain occupies 1510 to 1571 (YNSPQVQCLR…PVQQVEFISN (62 aa)).

Interacts with SRC. Forms a ternary complex with SRC and the PI3K 85 kDa subunit. Interacts with and is activated by the heterodimer formed by GNB1 and GNG2. Interacts with ODAM (via C-terminus). Interacts with RHOA. Post-translationally, activation of SRC induces tyrosine phosphorylation of ARHGEF5. Ubiquitously expressed with highest levels in placenta. High levels are also found in colon, kidney, trachea, prostate, liver, pancreas, pituitary gland, thyroid gland and mammary gland. In fetal tissues, expressed at high levels in kidney, lung and liver. Expressed at low levels in lung and heart.

The protein localises to the cytoplasm. It localises to the nucleus. It is found in the cell projection. Its subcellular location is the podosome. Its function is as follows. Guanine nucleotide exchange factor which activates Rho GTPases. Strongly activates RHOA. Also strongly activates RHOB, weakly activates RHOC and RHOG and shows no effect on RHOD, RHOV, RHOQ or RAC1. Involved in regulation of cell shape and actin cytoskeletal organization. Plays a role in actin organization by generating a loss of actin stress fibers and the formation of membrane ruffles and filopodia. Required for SRC-induced podosome formation. Involved in positive regulation of immature dendritic cell migration. The polypeptide is Rho guanine nucleotide exchange factor 5 (ARHGEF5) (Homo sapiens (Human)).